A 977-amino-acid polypeptide reads, in one-letter code: Bifunctional glutamine synthetase adenylyltransferase/adenylyl-removing enzyme (977 aa).

Residues 1–457 (MRLPLPSDLP…HFRQVIADPD (457 aa)) form an adenylyl removase region. Residues 468 to 977 (GGEWSPLWEQ…RRIWGELGLS (510 aa)) form an adenylyl transferase region.

The protein belongs to the GlnE family. Requires Mg(2+) as cofactor.

It catalyses the reaction [glutamine synthetase]-O(4)-(5'-adenylyl)-L-tyrosine + phosphate = [glutamine synthetase]-L-tyrosine + ADP. It carries out the reaction [glutamine synthetase]-L-tyrosine + ATP = [glutamine synthetase]-O(4)-(5'-adenylyl)-L-tyrosine + diphosphate. Its function is as follows. Involved in the regulation of glutamine synthetase GlnA, a key enzyme in the process to assimilate ammonia. When cellular nitrogen levels are high, the C-terminal adenylyl transferase (AT) inactivates GlnA by covalent transfer of an adenylyl group from ATP to specific tyrosine residue of GlnA, thus reducing its activity. Conversely, when nitrogen levels are low, the N-terminal adenylyl removase (AR) activates GlnA by removing the adenylyl group by phosphorolysis, increasing its activity. The regulatory region of GlnE binds the signal transduction protein PII (GlnB) which indicates the nitrogen status of the cell. In Pseudomonas putida (strain ATCC 47054 / DSM 6125 / CFBP 8728 / NCIMB 11950 / KT2440), this protein is Bifunctional glutamine synthetase adenylyltransferase/adenylyl-removing enzyme.